Reading from the N-terminus, the 557-residue chain is 2-succinyl-5-enolpyruvyl-6-hydroxy-3-cyclohexene-1-carboxylate synthase (557 aa).

It belongs to the TPP enzyme family. MenD subfamily. In terms of assembly, homodimer. It depends on Mg(2+) as a cofactor. Requires Mn(2+) as cofactor. The cofactor is thiamine diphosphate.

The enzyme catalyses isochorismate + 2-oxoglutarate + H(+) = 5-enolpyruvoyl-6-hydroxy-2-succinyl-cyclohex-3-ene-1-carboxylate + CO2. Its pathway is quinol/quinone metabolism; 1,4-dihydroxy-2-naphthoate biosynthesis; 1,4-dihydroxy-2-naphthoate from chorismate: step 2/7. It participates in quinol/quinone metabolism; menaquinone biosynthesis. In terms of biological role, catalyzes the thiamine diphosphate-dependent decarboxylation of 2-oxoglutarate and the subsequent addition of the resulting succinic semialdehyde-thiamine pyrophosphate anion to isochorismate to yield 2-succinyl-5-enolpyruvyl-6-hydroxy-3-cyclohexene-1-carboxylate (SEPHCHC). The sequence is that of 2-succinyl-5-enolpyruvyl-6-hydroxy-3-cyclohexene-1-carboxylate synthase from Staphylococcus aureus (strain MSSA476).